We begin with the raw amino-acid sequence, 509 residues long: Cytochrome P450 4X1 (509 aa).

Residues 14 to 34 (FYLAFVFCLALGLLQAIKLYL) form a helical membrane-spanning segment. Cysteine 454 contacts heme.

Belongs to the cytochrome P450 family. It depends on heme as a cofactor. Expressed in brain, heart, kidney and skin and, at lower levels, in skeletal muscle and liver. In the brain, high levels are detected in amygdala and lower levels in globus pallidus and cerebellum. In the heart, very high levels in aorta, but very low levels in other heart regions. Also expressed in breast, prostate and colon.

It localises to the endoplasmic reticulum membrane. It is found in the microsome membrane. The catalysed reaction is N-(5Z,8Z,11Z,14Z-eicosatetraenoyl)-ethanolamine + reduced [NADPH--hemoprotein reductase] + O2 = N-(14,15-epoxy-5Z,8Z,11Z-eicosatrienoyl)-ethanolamine + oxidized [NADPH--hemoprotein reductase] + H2O + H(+). In terms of biological role, a cytochrome P450 monooxygenase that selectively catalyzes the epoxidation of the last double bond of the arachidonoyl moiety of anandamide, potentially modulating endocannabinoid signaling. Has no hydroxylase activity toward various fatty acids, steroids and prostaglandins. Mechanistically, uses molecular oxygen inserting one oxygen atom into a substrate, and reducing the second into a water molecule, with two electrons provided by NADPH via cytochrome P450 reductase (CPR; NADPH-ferrihemoprotein reductase). The sequence is that of Cytochrome P450 4X1 from Homo sapiens (Human).